Consider the following 449-residue polypeptide: Mitochondrial distribution and morphology protein 10 (449 aa).

2 disordered regions span residues 215 to 244 (GPSE…DEED) and 282 to 307 (DATP…GAPS). Residues 285–301 (PPSFQLPSSSPTQPSLL) show a composition bias toward low complexity.

Belongs to the MDM10 family. In terms of assembly, component of the ER-mitochondria encounter structure (ERMES) or MDM complex, composed of MMM1, MDM10, MDM12 and MDM34. Associates with the mitochondrial outer membrane sorting assembly machinery SAM(core) complex.

The protein resides in the mitochondrion outer membrane. Component of the ERMES/MDM complex, which serves as a molecular tether to connect the endoplasmic reticulum and mitochondria. Components of this complex are involved in the control of mitochondrial shape and protein biogenesis and may function in phospholipid exchange. MDM10 is involved in the late assembly steps of the general translocase of the mitochondrial outer membrane (TOM complex). Functions in the TOM40-specific route of the assembly of outer membrane beta-barrel proteins, including the association of TOM40 with the receptor TOM22 and small TOM proteins. Can associate with the SAM(core) complex as well as the MDM12-MMM1 complex, both involved in late steps of the major beta-barrel assembly pathway, that is responsible for biogenesis of all outer membrane beta-barrel proteins. May act as a switch that shuttles between both complexes and channels precursor proteins into the TOM40-specific pathway. Plays a role in mitochondrial morphology and in the inheritance of mitochondria. The chain is Mitochondrial distribution and morphology protein 10 from Postia placenta (strain ATCC 44394 / Madison 698-R) (Brown rot fungus).